A 241-amino-acid chain; its full sequence is Uridylate kinase (241 aa).

ATP-binding positions include Lys10–Gly13, Gly53, and Arg57. UMP-binding positions include Asp72 and Ala133–Thr140. ATP contacts are provided by Asn161, Tyr167, and Asp170.

The protein belongs to the UMP kinase family. In terms of assembly, homohexamer.

The protein localises to the cytoplasm. The enzyme catalyses UMP + ATP = UDP + ADP. It functions in the pathway pyrimidine metabolism; CTP biosynthesis via de novo pathway; UDP from UMP (UMPK route): step 1/1. Its activity is regulated as follows. Inhibited by UTP. In terms of biological role, catalyzes the reversible phosphorylation of UMP to UDP. The sequence is that of Uridylate kinase from Aster yellows witches'-broom phytoplasma (strain AYWB).